A 238-amino-acid polypeptide reads, in one-letter code: Ribonuclease PH (238 aa).

Phosphate contacts are provided by residues Arg86 and 124 to 126; that span reads GTR.

It belongs to the RNase PH family. As to quaternary structure, homohexameric ring arranged as a trimer of dimers.

The enzyme catalyses tRNA(n+1) + phosphate = tRNA(n) + a ribonucleoside 5'-diphosphate. Its function is as follows. Phosphorolytic 3'-5' exoribonuclease that plays an important role in tRNA 3'-end maturation. Removes nucleotide residues following the 3'-CCA terminus of tRNAs; can also add nucleotides to the ends of RNA molecules by using nucleoside diphosphates as substrates, but this may not be physiologically important. Probably plays a role in initiation of 16S rRNA degradation (leading to ribosome degradation) during starvation. The sequence is that of Ribonuclease PH from Hahella chejuensis (strain KCTC 2396).